The following is a 121-amino-acid chain: MRKQPTVFEKLGGQAAMHAAVPLFYKKVLADDRVKHYFKNTNMEHQAKQQEDFLTMLLGGPNHYKGKNMAEAHKGMNLQNSHFDAIIENLAATLKELGVSDQIIGEAAKVIEHTRKDCLGK.

N-acetylmethionine is present on M1. A heme-binding site is contributed by H73.

It belongs to the truncated hemoglobin family. Group I subfamily. As to quaternary structure, monomer. Heme serves as cofactor.

This Tetrahymena thermophila protein is Group 1 truncated hemoglobin.